We begin with the raw amino-acid sequence, 150 residues long: MYDMINAKYLGKLIFLDFGQTITSLEETSDNSTFFIADEFGNFGSHYVGVVLEQVRSFNTVVILSYQSFANLRNIGGDNFKSQIINNTSTLIAHRLIDMMEAEEVANLYGVDITCASEIKSLKVGQALVRSISSYYGEIKDWLVQQIDKS.

This is an uncharacterized protein from Mycoplasma pneumoniae (strain ATCC 29342 / M129 / Subtype 1) (Mycoplasmoides pneumoniae).